Here is a 533-residue protein sequence, read N- to C-terminus: Glycoprotein (533 aa).

The signal sequence occupies residues 1–19 (MPLNAVIFTLLLRCSICLG). Over 20–459 (KFPFYTIPDK…DLGLPEWKRY (440 aa)) the chain is Virion surface. A helical transmembrane segment spans residues 460 to 480 (FLIGVSAVALLALSIIIAVCC). Residue Cys480 is the site of S-palmitoyl cysteine; by host attachment. Over 481–533 (KRFRKRKKSKPGPVELTRKVSVISKGNGPVPSWESYKEGTTGDVRNTTPSTRE) the chain is Intravirion. Positions 492 to 533 (GPVELTRKVSVISKGNGPVPSWESYKEGTTGDVRNTTPSTRE) are disordered. The segment covering 523–533 (DVRNTTPSTRE) has biased composition (polar residues).

Belongs to the lyssavirus glycoprotein family. As to quaternary structure, homotrimer. Interacts with matrix protein. Glycosylated and palmitoylated by host. Glycosylation is crucial for glycoprotein export at the cell surface.

The protein localises to the virion membrane. Its function is as follows. Attaches the virus to host cellular receptor, inducing endocytosis of the virion. In the endosome, the acidic pH induces conformational changes in the glycoprotein trimer, which trigger fusion between virus and cell membrane. This is Glycoprotein (G) from Duvenhage virus (DUVV).